The chain runs to 620 residues: MALLQIAEPGQSPQPHQRRLAVGIDLGTTNSLVAALRSGLSEPLADAQGQVILPSAVRYHADRVEVGESARLAAPTDPLNTVLSVKRLMGRGLSDVKQLGEQLPYRFVEGESHMPFIETIQGPKSPVEVSAEVLKVLRQRAEAALGGELVGAVITVPAYFDDAQRQATKDAAKLAGLNVLRLLNEPTAAAVAYGLDQHAEGVVAIYDLGGGTFDISILRLTGGVFEVLATGGDTALGGDDFDHAIAGWIIEGAGLSADLDPGTQRSLLQAACAAKEALTGAASVEVVYGDWRATLTRDAFDALIEPMVARSLKACRRAVRDSNVELDEVQAVVMVGGSTRVPRVREAVAEMFGRQPLTEIDPDQVVAIGAAIQADTLAGNKREGGELLLLDVIPLSLGLETMGGLMEKVIPRNTTIPVARAQDFTTYKDGQTAMMVHVLQGERELISDCRSLARFELRGIPPMVAGAAKIRVTFQVDADGLLSVSARELGSGVEASIQVKPSYGLTDGEIAKMLKDSFQYAGDDKVARVLREQQVDAQRLIEAVQGALDADGERLLDAEERMVIELQMQELSELMRGTDGYAIEQQTKRLSQVTDAFAARRLDSTVKAALAGRNLNEIEE.

This sequence belongs to the heat shock protein 70 family.

In terms of biological role, chaperone involved in the maturation of iron-sulfur cluster-containing proteins. Has a low intrinsic ATPase activity which is markedly stimulated by HscB. In Pseudomonas fluorescens (strain ATCC BAA-477 / NRRL B-23932 / Pf-5), this protein is Chaperone protein HscA homolog.